A 731-amino-acid chain; its full sequence is Auxin response factor 3 (731 aa).

The segment covering 1–22 (MASSASSSSSPSSRPPLMALPS) has biased composition (low complexity). Residues 1–41 (MASSASSSSSPSSRPPLMALPSFYRPPWPSERGGEQRATDC) are disordered. A DNA-binding region (TF-B3) is located at residues 191–293 (FCKTLTASDT…ELRLGVRRAT (103 aa)).

It belongs to the ARF family. In terms of assembly, homo and heterodimers. In terms of tissue distribution, expressed in roots, culms, leaves and young panicles.

The protein localises to the nucleus. Its function is as follows. Auxin response factors (ARFs) are transcriptional factors that bind specifically to the DNA sequence 5'-TGTCTC-3' found in the auxin-responsive promoter elements (AuxREs). The polypeptide is Auxin response factor 3 (ARF3) (Oryza sativa subsp. japonica (Rice)).